The following is a 603-amino-acid chain: Probable potassium transport system protein Kup (603 aa).

The next 12 helical transmembrane spans lie at 15–35 (GLVF…IFLL), 43–63 (IIGV…VEYA), 94–114 (VAFV…DGVI), 135–155 (NIGQ…LFSV), 163–183 (ITWV…FSGI), 209–229 (GIIG…GEAL), 244–264 (AWRF…AFLI), 283–303 (ILYI…SQAM), 336–356 (IYIS…MLIF), 365–385 (AYGL…TSIF), 390–410 (NITK…FLLS), and 415–435 (IPHG…LILI).

It belongs to the HAK/KUP transporter (TC 2.A.72) family.

Its subcellular location is the cell membrane. It carries out the reaction K(+)(in) + H(+)(in) = K(+)(out) + H(+)(out). In terms of biological role, transport of potassium into the cell. Likely operates as a K(+):H(+) symporter. This is Probable potassium transport system protein Kup from Methanosarcina barkeri (strain Fusaro / DSM 804).